The chain runs to 288 residues: Diaminopimelate epimerase (288 aa).

The substrate site is built by N14 and N67. Catalysis depends on C76, which acts as the Proton donor. Substrate contacts are provided by residues 77 to 78 (GN), N166, N199, and 217 to 218 (ER). Catalysis depends on C226, which acts as the Proton acceptor. A substrate-binding site is contributed by 227-228 (GT).

It belongs to the diaminopimelate epimerase family. As to quaternary structure, homodimer.

Its subcellular location is the cytoplasm. It carries out the reaction (2S,6S)-2,6-diaminopimelate = meso-2,6-diaminopimelate. It functions in the pathway amino-acid biosynthesis; L-lysine biosynthesis via DAP pathway; DL-2,6-diaminopimelate from LL-2,6-diaminopimelate: step 1/1. In terms of biological role, catalyzes the stereoinversion of LL-2,6-diaminopimelate (L,L-DAP) to meso-diaminopimelate (meso-DAP), a precursor of L-lysine and an essential component of the bacterial peptidoglycan. This is Diaminopimelate epimerase from Bacillus cereus (strain 03BB102).